The chain runs to 316 residues: tRNA dimethylallyltransferase (316 aa).

17–24 (GPTASGKT) contacts ATP. 19 to 24 (TASGKT) is a substrate binding site. Interaction with substrate tRNA stretches follow at residues 42–45 (DSAL), 166–170 (QRLSR), and 247–252 (RCVGYR).

It belongs to the IPP transferase family. As to quaternary structure, monomer. Requires Mg(2+) as cofactor.

It catalyses the reaction adenosine(37) in tRNA + dimethylallyl diphosphate = N(6)-dimethylallyladenosine(37) in tRNA + diphosphate. Functionally, catalyzes the transfer of a dimethylallyl group onto the adenine at position 37 in tRNAs that read codons beginning with uridine, leading to the formation of N6-(dimethylallyl)adenosine (i(6)A). This Salmonella newport (strain SL254) protein is tRNA dimethylallyltransferase.